The primary structure comprises 523 residues: Light-independent protochlorophyllide reductase subunit B (523 aa).

Aspartate 36 contacts [4Fe-4S] cluster. The active-site Proton donor is aspartate 290. 425–426 (GL) is a binding site for substrate.

This sequence belongs to the ChlB/BchB/BchZ family. Protochlorophyllide reductase is composed of three subunits; ChlL, ChlN and ChlB. Forms a heterotetramer of two ChlB and two ChlN subunits. [4Fe-4S] cluster is required as a cofactor.

It catalyses the reaction chlorophyllide a + oxidized 2[4Fe-4S]-[ferredoxin] + 2 ADP + 2 phosphate = protochlorophyllide a + reduced 2[4Fe-4S]-[ferredoxin] + 2 ATP + 2 H2O. Its pathway is porphyrin-containing compound metabolism; chlorophyll biosynthesis (light-independent). Component of the dark-operative protochlorophyllide reductase (DPOR) that uses Mg-ATP and reduced ferredoxin to reduce ring D of protochlorophyllide (Pchlide) to form chlorophyllide a (Chlide). This reaction is light-independent. The NB-protein (ChlN-ChlB) is the catalytic component of the complex. This chain is Light-independent protochlorophyllide reductase subunit B, found in Prochlorococcus marinus (strain MIT 9215).